The primary structure comprises 473 residues: Photosystem II CP43 reaction center protein (473 aa).

A propeptide spanning residues 1 to 14 (MKTLYSLRRFYHVE) is cleaved from the precursor. An N-acetylthreonine modification is found at threonine 15. Threonine 15 is subject to Phosphothreonine. The next 5 helical transmembrane spans lie at 69 to 93 (LFEVAHFVPEKPMYEQGLILLPHLA), 134 to 155 (LLGPETLEESFPFFGYVWKDRN), 178 to 200 (KALYFGGVYDTWAPGGGDVRKIT), 255 to 275 (KPFAWARRALVWSGEAYLSYS), and 291 to 312 (WFNNTAYPSEFYGPTGPEASQA). Residue glutamate 367 participates in [CaMn4O5] cluster binding. Residues 447-471 (RARAAAAGFEKGIDRDFEPVLSMTP) traverse the membrane as a helical segment.

The protein belongs to the PsbB/PsbC family. PsbC subfamily. As to quaternary structure, PSII is composed of 1 copy each of membrane proteins PsbA, PsbB, PsbC, PsbD, PsbE, PsbF, PsbH, PsbI, PsbJ, PsbK, PsbL, PsbM, PsbT, PsbX, PsbY, PsbZ, Psb30/Ycf12, at least 3 peripheral proteins of the oxygen-evolving complex and a large number of cofactors. It forms dimeric complexes. Binds multiple chlorophylls and provides some of the ligands for the Ca-4Mn-5O cluster of the oxygen-evolving complex. It may also provide a ligand for a Cl- that is required for oxygen evolution. PSII binds additional chlorophylls, carotenoids and specific lipids. serves as cofactor.

The protein resides in the plastid. It localises to the chloroplast thylakoid membrane. Its function is as follows. One of the components of the core complex of photosystem II (PSII). It binds chlorophyll and helps catalyze the primary light-induced photochemical processes of PSII. PSII is a light-driven water:plastoquinone oxidoreductase, using light energy to abstract electrons from H(2)O, generating O(2) and a proton gradient subsequently used for ATP formation. The protein is Photosystem II CP43 reaction center protein of Nicotiana tabacum (Common tobacco).